The primary structure comprises 402 residues: Formate-dependent phosphoribosylglycinamide formyltransferase (402 aa).

N(1)-(5-phospho-beta-D-ribosyl)glycinamide contacts are provided by residues 23-24 (EL) and glutamate 83. Residues arginine 116, lysine 157, 162–167 (SSGKGQ), 197–200 (ESQI), and glutamate 205 contribute to the ATP site. An ATP-grasp domain is found at 121-316 (RLAAEELGLP…EFELHARAIL (196 aa)). Positions 275 and 287 each coordinate Mg(2+). Residues aspartate 294, lysine 363, and 370 to 371 (RR) each bind N(1)-(5-phospho-beta-D-ribosyl)glycinamide.

The protein belongs to the PurK/PurT family. As to quaternary structure, homodimer.

It carries out the reaction N(1)-(5-phospho-beta-D-ribosyl)glycinamide + formate + ATP = N(2)-formyl-N(1)-(5-phospho-beta-D-ribosyl)glycinamide + ADP + phosphate + H(+). It participates in purine metabolism; IMP biosynthesis via de novo pathway; N(2)-formyl-N(1)-(5-phospho-D-ribosyl)glycinamide from N(1)-(5-phospho-D-ribosyl)glycinamide (formate route): step 1/1. Involved in the de novo purine biosynthesis. Catalyzes the transfer of formate to 5-phospho-ribosyl-glycinamide (GAR), producing 5-phospho-ribosyl-N-formylglycinamide (FGAR). Formate is provided by PurU via hydrolysis of 10-formyl-tetrahydrofolate. The sequence is that of Formate-dependent phosphoribosylglycinamide formyltransferase from Acinetobacter baumannii (strain ATCC 17978 / DSM 105126 / CIP 53.77 / LMG 1025 / NCDC KC755 / 5377).